The chain runs to 209 residues: Small ribosomal subunit protein uS4 (209 aa).

4 residues coordinate Zn(2+): Cys9, Cys12, Cys26, and Cys31. The C4-type zinc finger occupies 9 to 31; it reads CRLCRREGVKLYLKGERCYSPKC. Residues 100-162 form the S4 RNA-binding domain; sequence RLDNVVYRLG…RNLELIRQNL (63 aa).

Belongs to the universal ribosomal protein uS4 family. Part of the 30S ribosomal subunit. Contacts protein S5. The interaction surface between S4 and S5 is involved in control of translational fidelity. Zn(2+) is required as a cofactor.

One of the primary rRNA binding proteins, it binds directly to 16S rRNA where it helps nucleate assembly of the body and platform of the 30S subunit. The sequence is that of Small ribosomal subunit protein uS4 (rpsD) from Thermus thermophilus (strain ATCC BAA-163 / DSM 7039 / HB27).